Consider the following 197-residue polypeptide: NADH-quinone oxidoreductase subunit B (197 aa).

Residues C63, C64, C129, and C159 each contribute to the [4Fe-4S] cluster site.

It belongs to the complex I 20 kDa subunit family. In terms of assembly, NDH-1 is composed of 14 different subunits. Subunits NuoB, C, D, E, F, and G constitute the peripheral sector of the complex. [4Fe-4S] cluster is required as a cofactor.

It is found in the cell inner membrane. The enzyme catalyses a quinone + NADH + 5 H(+)(in) = a quinol + NAD(+) + 4 H(+)(out). Functionally, NDH-1 shuttles electrons from NADH, via FMN and iron-sulfur (Fe-S) centers, to quinones in the respiratory chain. The immediate electron acceptor for the enzyme in this species is believed to be a menaquinone. Couples the redox reaction to proton translocation (for every two electrons transferred, four hydrogen ions are translocated across the cytoplasmic membrane), and thus conserves the redox energy in a proton gradient. The chain is NADH-quinone oxidoreductase subunit B from Bacteroides thetaiotaomicron (strain ATCC 29148 / DSM 2079 / JCM 5827 / CCUG 10774 / NCTC 10582 / VPI-5482 / E50).